Here is a 287-residue protein sequence, read N- to C-terminus: Inactive phospholipid phosphatase 7 (287 aa).

The disordered stretch occupies residues M1–E75. Residues M1 to M120 lie on the Cytoplasmic side of the membrane. Residues S31 to S40 show a composition bias toward gly residues. Residues Q49–E65 show a composition bias toward low complexity. Residues V121–L141 traverse the membrane as a helical segment. Residues M142–T146 lie on the Extracellular side of the membrane. Residues L147–V167 form a helical membrane-spanning segment. Over S168–H215 the chain is Cytoplasmic. The chain crosses the membrane as a helical span at residues L216 to S236. Residues R237 to D247 are Extracellular-facing. A helical membrane pass occupies residues V248–S268. The Cytoplasmic segment spans residues S269–Y287.

Belongs to the PA-phosphatase related phosphoesterase family.

The protein localises to the nucleus envelope. It is found in the endoplasmic reticulum membrane. It localises to the membrane. Functionally, plays a role as negative regulator of myoblast differentiation, in part through effects on MTOR signaling. Has no detectable enzymatic activity. The sequence is that of Inactive phospholipid phosphatase 7 from Danio rerio (Zebrafish).